We begin with the raw amino-acid sequence, 453 residues long: uncharacterized protein (453 aa).

This is an uncharacterized protein from Caenorhabditis elegans.